Reading from the N-terminus, the 413-residue chain is Alpha-1-antitrypsin-like protein GS55-MS (413 aa).

A signal peptide spans 1 to 24 (MPSSISWGLLLLAGLSCLVAGSLA). Residues asparagine 65, asparagine 102, and asparagine 266 are each glycosylated (N-linked (GlcNAc...) asparagine). The tract at residues 368–387 (GATFLEMMPMSLPPEVKFDK) is RCL.

The protein belongs to the serpin family.

The protein resides in the secreted. Its function is as follows. Inhibitor of serine proteases. Its primary target is elastase, but it also has a moderate affinity for plasmin and thrombin. This Ictidomys tridecemlineatus (Thirteen-lined ground squirrel) protein is Alpha-1-antitrypsin-like protein GS55-MS.